The chain runs to 207 residues: High frequency lysogenization protein HflD homolog (207 aa).

The protein belongs to the HflD family.

The protein localises to the cytoplasm. The protein resides in the cell inner membrane. The chain is High frequency lysogenization protein HflD homolog from Tolumonas auensis (strain DSM 9187 / NBRC 110442 / TA 4).